A 560-amino-acid polypeptide reads, in one-letter code: ATP synthase subunit beta, mitochondrial (560 aa).

The transit peptide at 1–54 (MASRRLLASLLRQSAQRGGGLISRSLGNSIPKSASRASSRASPKGFLLNRAVQY) directs the protein to the mitochondrion. Disordered regions lie at residues 20 to 44 (GLIS…ASPK) and 58 to 81 (AAAP…KITD). Low complexity-rich tracts occupy residues 33–42 (SASRASSRAS) and 58–71 (AAAP…PPKS). 235–242 (GGAGVGKT) provides a ligand contact to ATP.

Belongs to the ATPase alpha/beta chains family. In terms of assembly, F-type ATPases have 2 components, CF(1) - the catalytic core - and CF(0) - the membrane proton channel. CF(1) has five subunits: alpha(3), beta(3), gamma(1), delta(1), epsilon(1). CF(0) has three main subunits: a, b and c.

The protein localises to the mitochondrion. It localises to the mitochondrion inner membrane. The catalysed reaction is ATP + H2O + 4 H(+)(in) = ADP + phosphate + 5 H(+)(out). Mitochondrial membrane ATP synthase (F(1)F(0) ATP synthase or Complex V) produces ATP from ADP in the presence of a proton gradient across the membrane which is generated by electron transport complexes of the respiratory chain. F-type ATPases consist of two structural domains, F(1) - containing the extramembraneous catalytic core, and F(0) - containing the membrane proton channel, linked together by a central stalk and a peripheral stalk. During catalysis, ATP synthesis in the catalytic domain of F(1) is coupled via a rotary mechanism of the central stalk subunits to proton translocation. Subunits alpha and beta form the catalytic core in F(1). Rotation of the central stalk against the surrounding alpha(3)beta(3) subunits leads to hydrolysis of ATP in three separate catalytic sites on the beta subunits. This chain is ATP synthase subunit beta, mitochondrial (ATPB), found in Nicotiana plumbaginifolia (Leadwort-leaved tobacco).